Consider the following 684-residue polypeptide: TBC1 domain family member 23 (684 aa).

The region spanning 44–225 (PLPAELRAKV…AIWDGYLQQA (182 aa)) is the Rab-GAP TBC domain. Ser-300 carries the phosphoserine modification. The 113-residue stretch at 334–446 (EGVRFFVVDC…LQQHLADINV (113 aa)) folds into the Rhodanese domain. Phosphoserine occurs at positions 469, 474, and 507. Thr-514 carries the phosphothreonine modification. A may mediate the interaction with C17orf75, FAM91A1 and WDR11 region spans residues 514-558 (TPVDRHVSSSDRVGKPYRGVKPVFSIGDEEEYDTDEIDSSSMSDD). Residues 514–684 (TPVDRHVSSS…IMKVLDALES (171 aa)) are may mediate the interaction with WASHC1. The residue at position 556 (Ser-556) is a Phosphoserine. A may mediate the interaction with FKBP15 and WASHC2; required for endosome to Golgi trafficking region spans residues 559-684 (DRKEVVNIQT…IMKVLDALES (126 aa)).

Directly interacts with GOLGA1 and GOLGA4. Interacts with FAM91A1, C17ORF75 and WDR11; the interaction recruits TBC1D23 to AP-1-derived vesicles. Directly interacts with WASHC1 and WASHC2/FAM21. Interacts with FKBP15.

It localises to the golgi apparatus. The protein resides in the trans-Golgi network. The protein localises to the cytoplasmic vesicle. Functionally, putative Rab GTPase-activating protein which plays a role in vesicular trafficking. Involved in endosome-to-Golgi trafficking. Acts as a bridging protein by binding simultaneously to golgins, including GOLGA1 and GOLGA4, located at the trans-Golgi, and to the WASH complex, located on endosome-derived vesicles. Together with WDR11 complex facilitates the golgin-mediated capture of vesicles generated using AP-1. Plays a role in brain development, including in cortical neuron positioning. May also be important for neurite outgrowth, possibly through its involvement in membrane trafficking and cargo delivery, 2 processes which are essential for axonal and dendritic growth. May act as a general inhibitor of innate immunity signaling, strongly inhibiting multiple TLR and dectin/CLEC7A-signaling pathways. Does not alter initial activation events, but instead affects maintenance of inflammatory gene expression several hours after bacterial lipopolysaccharide (LPS) challenge. The protein is TBC1 domain family member 23 (Tbc1d23) of Mus musculus (Mouse).